The chain runs to 610 residues: MIQVLLVTILAVFPYQGSSIILGSGNVNDYEVVYPRKVTALPKGAVQPKYEDAMQYELKVNGEPMVLHLEKNKQLFSKDYSETHYSPDGREITTYPLVEDHCYYHGRIENDADSTASISACNGLKGHFKLQGEIYLIEPLKLRDSEAHAVFKYENVEKEDEAPKMCGVTQNWESYEPIKKASQLVVTAEQQRYLNPYRYVELVIVADHGMFTKYNRNLTEVKTWVYEIVNTLNEIYRYLYIRVALVGLEIWSDGDLSNVTLSSGNTLDSFGEWRKRDLLRRKRHDNAQLLTAIDFSGNTIGRASIANMCDPKYSTGIVQDHSPINLLVAVTMAHEMGHNLGLHHDGKSCTCGDYICIMNATLSHQHSKYFSNCSYNQYWDYINTYTPKCILNEPLRTDIISPPVCGNELLEAGEECDCGSPRNCQYQCCDAATCKLHSWVECESGVCCEQCKFRTAGTECRARRSECDIAESCTGQSADCPTDDFHKNGQPCLNNFGYCYNGNCPIMYHQCYALFGSNVYEAEDSCFESNQKGDDYGYCRKENGEKIPCAPEDVKCGRLYCNDNSPGQNDPCKIFPSNEDEHKEMVLPGTKCADGKFCTNGHCVDVATAY.

A signal peptide spans 1–19; that stretch reads MIQVLLVTILAVFPYQGSS. Positions 20–188 are excised as a propeptide; the sequence is IILGSGNVND…KKASQLVVTA (169 aa). The region spanning 198 to 394 is the Peptidase M12B domain; that stretch reads RYVELVIVAD…YTPKCILNEP (197 aa). Glu201 serves as a coordination point for Ca(2+). Asn217 carries an N-linked (GlcNAc...) asparagine glycan. A Ca(2+)-binding site is contributed by Asp285. 3 disulfide bridges follow: Cys309–Cys389, Cys349–Cys373, and Cys351–Cys356. His334 contributes to the Zn(2+) binding site. Glu335 is an active-site residue. Residues His338 and His344 each contribute to the Zn(2+) site. Positions 389, 392, 404, 407, 411, 414, and 417 each coordinate Ca(2+). Positions 402–488 constitute a Disintegrin domain; the sequence is PPVCGNELLE…DCPTDDFHKN (87 aa). Cystine bridges form between Cys405/Cys434, Cys416/Cys429, Cys418/Cys424, Cys428/Cys451, Cys442/Cys448, Cys447/Cys473, Cys460/Cys480, Cys467/Cys499, Cys492/Cys504, Cys511/Cys561, Cys526/Cys572, Cys539/Cys549, Cys556/Cys598, and Cys592/Cys603. The D/ECD-tripeptide signature appears at 466-468; it reads ECD.

This sequence belongs to the venom metalloproteinase (M12B) family. P-III subfamily. Requires Zn(2+) as cofactor. In terms of tissue distribution, expressed by the venom gland.

It is found in the secreted. In terms of biological role, snake venom metalloproteinase that impairs hemostasis in the envenomed animal. The polypeptide is Zinc metalloproteinase-disintegrin-like 3a (Crotalus adamanteus (Eastern diamondback rattlesnake)).